The sequence spans 225 residues: Ribose-5-phosphate isomerase A (225 aa).

Residues 32–35 (TGST), 85–88 (DGAD), and 98–101 (KGGG) each bind substrate. Glu107 acts as the Proton acceptor in catalysis. Lys125 provides a ligand contact to substrate.

It belongs to the ribose 5-phosphate isomerase family. Homodimer.

The enzyme catalyses aldehydo-D-ribose 5-phosphate = D-ribulose 5-phosphate. It participates in carbohydrate degradation; pentose phosphate pathway; D-ribose 5-phosphate from D-ribulose 5-phosphate (non-oxidative stage): step 1/1. Catalyzes the reversible conversion of ribose-5-phosphate to ribulose 5-phosphate. The polypeptide is Ribose-5-phosphate isomerase A (Hahella chejuensis (strain KCTC 2396)).